The chain runs to 260 residues: Voltage-dependent calcium channel gamma-6 subunit (260 aa).

4 helical membrane passes run 43-63 (LLVA…EFWV), 143-163 (VIAV…IMVL), 169-189 (FLLR…FVSL), and 221-241 (LGCG…FLLL).

Belongs to the PMP-22/EMP/MP20 family. CACNG subfamily. In terms of assembly, interacts with CACNA1C. Identified in a complex with the L-type calcium channel subunits CACNA1C, CACNA2D1 and either CACNB1 or CACNB2. Detected in heart atrium and ventricle, aorta and skeletal muscle. Detected in heart left ventricle.

It is found in the cell membrane. Functionally, regulates the activity of L-type calcium channels that contain CACNA1C as pore-forming subunit. In Rattus norvegicus (Rat), this protein is Voltage-dependent calcium channel gamma-6 subunit (Cacng6).